The following is a 255-amino-acid chain: Thiazole synthase (255 aa).

Catalysis depends on K95, which acts as the Schiff-base intermediate with DXP. 1-deoxy-D-xylulose 5-phosphate contacts are provided by residues G156, 182–183, and 204–205; these read AG and NT.

This sequence belongs to the ThiG family. In terms of assembly, homotetramer. Forms heterodimers with either ThiH or ThiS.

It is found in the cytoplasm. It carries out the reaction [ThiS sulfur-carrier protein]-C-terminal-Gly-aminoethanethioate + 2-iminoacetate + 1-deoxy-D-xylulose 5-phosphate = [ThiS sulfur-carrier protein]-C-terminal Gly-Gly + 2-[(2R,5Z)-2-carboxy-4-methylthiazol-5(2H)-ylidene]ethyl phosphate + 2 H2O + H(+). It functions in the pathway cofactor biosynthesis; thiamine diphosphate biosynthesis. Its function is as follows. Catalyzes the rearrangement of 1-deoxy-D-xylulose 5-phosphate (DXP) to produce the thiazole phosphate moiety of thiamine. Sulfur is provided by the thiocarboxylate moiety of the carrier protein ThiS. In vitro, sulfur can be provided by H(2)S. The protein is Thiazole synthase of Vibrio parahaemolyticus serotype O3:K6 (strain RIMD 2210633).